Here is a 259-residue protein sequence, read N- to C-terminus: Type III pantothenate kinase (259 aa).

ATP is bound at residue 6 to 13 (DIGNTNVV). A substrate-binding site is contributed by 107–110 (GADR). Residue aspartate 109 is the Proton acceptor of the active site. Aspartate 129 provides a ligand contact to K(+). Threonine 132 contacts ATP. Threonine 184 contributes to the substrate binding site.

Belongs to the type III pantothenate kinase family. Homodimer. NH4(+) serves as cofactor. K(+) is required as a cofactor.

The protein localises to the cytoplasm. The catalysed reaction is (R)-pantothenate + ATP = (R)-4'-phosphopantothenate + ADP + H(+). It participates in cofactor biosynthesis; coenzyme A biosynthesis; CoA from (R)-pantothenate: step 1/5. Catalyzes the phosphorylation of pantothenate (Pan), the first step in CoA biosynthesis. This Thermomicrobium roseum (strain ATCC 27502 / DSM 5159 / P-2) protein is Type III pantothenate kinase.